The sequence spans 697 residues: Elongation factor G 2 (697 aa).

Residues 5–280 (SLYRNIGIFA…AVVDYLPSPT (276 aa)) form the tr-type G domain. Residues 14–21 (AHVDAGKT), 78–82 (DTPGH), and 132–135 (NKLD) each bind GTP.

It belongs to the TRAFAC class translation factor GTPase superfamily. Classic translation factor GTPase family. EF-G/EF-2 subfamily.

The protein resides in the cytoplasm. Catalyzes the GTP-dependent ribosomal translocation step during translation elongation. During this step, the ribosome changes from the pre-translocational (PRE) to the post-translocational (POST) state as the newly formed A-site-bound peptidyl-tRNA and P-site-bound deacylated tRNA move to the P and E sites, respectively. Catalyzes the coordinated movement of the two tRNA molecules, the mRNA and conformational changes in the ribosome. This is Elongation factor G 2 from Saccharophagus degradans (strain 2-40 / ATCC 43961 / DSM 17024).